We begin with the raw amino-acid sequence, 176 residues long: Large ribosomal subunit protein uL16 (176 aa).

The protein belongs to the universal ribosomal protein uL16 family.

This Halobacterium salinarum (strain ATCC 29341 / DSM 671 / R1) protein is Large ribosomal subunit protein uL16.